The following is a 356-amino-acid chain: NF-kappa-B inhibitor beta (356 aa).

Phosphoserine; by RPS6KA1 occurs at positions 19 and 23. ANK repeat units follow at residues 57–86, 93–122, and 126–155; these read DGDT…GTEY, LGQT…GLCV, and RGHT…RRPR. The segment at 149–193 is disordered; it reads PRPRRPREAPDTYLAQGPDRTPDTNHTPVALYPDSDLEKEEEESE. The residue at position 183 (Ser-183) is a Phosphoserine. The segment covering 183 to 193 has biased composition (acidic residues); the sequence is SDLEKEEEESE. 3 ANK repeats span residues 206–235, 240–269, and 273–302; these read EGHT…DLDK, CGRS…NPAA, and GGRT…PEPE. The disordered stretch occupies residues 298–356; it reads APEPEGEDEKSGPCSSSSDSDSGDEGDEYDDIVVHSSRSQTRLPPTPASKPLPDDPRPV. 2 positions are modified to phosphoserine; by CK2: Ser-313 and Ser-315. Residues 318–328 are compositionally biased toward acidic residues; the sequence is DSGDEGDEYDD.

The protein belongs to the NF-kappa-B inhibitor family. As to quaternary structure, interacts with THRB (via ligand-binding domain). Interacts with RELA and REL. Interacts with COMMD1. Interacts with inhibitor kappa B-interacting Ras-like NKIRAS1 and NKIRAS2. In terms of processing, phosphorylated by RPS6KA1; followed by degradation. Interaction with NKIRAS1 and NKIRAS2 probably prevents phosphorylation. In terms of tissue distribution, expressed in all tissues examined.

The protein localises to the cytoplasm. It localises to the nucleus. Functionally, inhibits NF-kappa-B by complexing with and trapping it in the cytoplasm. However, the unphosphorylated form resynthesized after cell stimulation is able to bind NF-kappa-B allowing its transport to the nucleus and protecting it to further NFKBIA-dependent inactivation. Association with inhibitor kappa B-interacting NKIRAS1 and NKIRAS2 prevent its phosphorylation rendering it more resistant to degradation, explaining its slower degradation. This chain is NF-kappa-B inhibitor beta (NFKBIB), found in Homo sapiens (Human).